The chain runs to 61 residues: Small ribosomal subunit protein uS14 (61 aa).

Zn(2+) contacts are provided by Cys24, Cys27, Cys40, and Cys43.

Belongs to the universal ribosomal protein uS14 family. Zinc-binding uS14 subfamily. In terms of assembly, part of the 30S ribosomal subunit. Contacts proteins S3 and S10. It depends on Zn(2+) as a cofactor.

Functionally, binds 16S rRNA, required for the assembly of 30S particles and may also be responsible for determining the conformation of the 16S rRNA at the A site. The sequence is that of Small ribosomal subunit protein uS14 from Roseiflexus sp. (strain RS-1).